Reading from the N-terminus, the 145-residue chain is Protein SprT-like (145 aa).

Positions 4–140 constitute a SprT-like domain; that stretch reads TNYVQEVSLA…VCGNCHGKLM (137 aa). Position 64 (His-64) interacts with Zn(2+). Glu-65 is a catalytic residue. Position 68 (His-68) interacts with Zn(2+).

It belongs to the SprT family. Requires Zn(2+) as cofactor.

It is found in the cytoplasm. The protein is Protein SprT-like of Streptococcus pyogenes serotype M1.